A 412-amino-acid polypeptide reads, in one-letter code: Multifunctional CCA protein (412 aa).

The ATP site is built by glycine 8 and arginine 11. Glycine 8 and arginine 11 together coordinate CTP. The Mg(2+) site is built by aspartate 21 and aspartate 23. 3 residues coordinate ATP: arginine 91, arginine 137, and arginine 140. CTP-binding residues include arginine 91, arginine 137, and arginine 140. The region spanning 228–329 (TGIHTLMTLS…VKLFDSIDAW (102 aa)) is the HD domain.

It belongs to the tRNA nucleotidyltransferase/poly(A) polymerase family. Bacterial CCA-adding enzyme type 1 subfamily. Monomer. Can also form homodimers and oligomers. It depends on Mg(2+) as a cofactor. Ni(2+) is required as a cofactor.

The catalysed reaction is a tRNA precursor + 2 CTP + ATP = a tRNA with a 3' CCA end + 3 diphosphate. It catalyses the reaction a tRNA with a 3' CCA end + 2 CTP + ATP = a tRNA with a 3' CCACCA end + 3 diphosphate. Functionally, catalyzes the addition and repair of the essential 3'-terminal CCA sequence in tRNAs without using a nucleic acid template. Adds these three nucleotides in the order of C, C, and A to the tRNA nucleotide-73, using CTP and ATP as substrates and producing inorganic pyrophosphate. tRNA 3'-terminal CCA addition is required both for tRNA processing and repair. Also involved in tRNA surveillance by mediating tandem CCA addition to generate a CCACCA at the 3' terminus of unstable tRNAs. While stable tRNAs receive only 3'-terminal CCA, unstable tRNAs are marked with CCACCA and rapidly degraded. The sequence is that of Multifunctional CCA protein from Escherichia coli O157:H7.